We begin with the raw amino-acid sequence, 142 residues long: Large ribosomal subunit protein uL13 (142 aa).

This sequence belongs to the universal ribosomal protein uL13 family. Part of the 50S ribosomal subunit.

In terms of biological role, this protein is one of the early assembly proteins of the 50S ribosomal subunit, although it is not seen to bind rRNA by itself. It is important during the early stages of 50S assembly. The protein is Large ribosomal subunit protein uL13 of Hamiltonella defensa subsp. Acyrthosiphon pisum (strain 5AT).